The chain runs to 57 residues: uncharacterized protein (57 aa).

A signal peptide spans 1–20 (MKKLALILFMGTLVSFYADA).

This is an uncharacterized protein from Escherichia coli (strain K12).